The following is a 530-amino-acid chain: BTB/POZ domain-containing protein 3 (530 aa).

The interval 23–48 (KNRSKKGSKKANSSGGGGGGGSVGSG) is disordered. The span at 36–46 (SGGGGGGGSVG) shows a compositional bias: gly residues. The 71-residue stretch at 128 to 198 (ADVHFVVGPP…IYCDEIDLAA (71 aa)) folds into the BTB domain. Positions 243 to 308 (FEEPDLTQRC…NWAEVECQRQ (66 aa)) constitute a BACK domain.

As to expression, in the somatosensory cortex, specifically expressed in spiny stellate neurons during barrel formation. Also expressed in the olfactory bulb, piriform cortex and hippocampus.

The protein localises to the cytoplasm. It is found in the cytosol. Its subcellular location is the nucleus. Its function is as follows. Acts as a key regulator of dendritic field orientation during development of sensory cortex. Also directs dendrites toward active axon terminals when ectopically expressed. The sequence is that of BTB/POZ domain-containing protein 3 (Btbd3) from Mus musculus (Mouse).